We begin with the raw amino-acid sequence, 269 residues long: GTP cyclohydrolase FolE2 1 (269 aa).

Belongs to the GTP cyclohydrolase IV family.

The catalysed reaction is GTP + H2O = 7,8-dihydroneopterin 3'-triphosphate + formate + H(+). Its pathway is cofactor biosynthesis; 7,8-dihydroneopterin triphosphate biosynthesis; 7,8-dihydroneopterin triphosphate from GTP: step 1/1. Converts GTP to 7,8-dihydroneopterin triphosphate. In Burkholderia cenocepacia (strain HI2424), this protein is GTP cyclohydrolase FolE2 1.